The sequence spans 296 residues: Putative ankyrin repeat protein FPV216 (296 aa).

2 ANK repeats span residues 73-102 and 107-136; these read SYVN…DVNT and LVIT…NINI.

This Fowlpox virus (strain NVSL) (FPV) protein is Putative ankyrin repeat protein FPV216.